The chain runs to 206 residues: Ras-related protein Ral-B (206 aa).

21 to 29 serves as a coordination point for GTP; that stretch reads GSGGVGKSA. The short motif at 43-51 is the Effector region element; sequence YEPTKADSY. GTP-binding positions include 68 to 72, 128 to 131, and 158 to 160; these read DTAGQ, NKSD, and SAK. Residues 180–189 show a composition bias toward basic and acidic residues; the sequence is KMSENKDKNG. The tract at residues 180 to 206 is disordered; sequence KMSENKDKNGKKSGKNKKSFKERCCLL. A Cysteine methyl ester modification is found at Cys-203. Residue Cys-203 is the site of S-geranylgeranyl cysteine attachment. The propeptide at 204-206 is removed in mature form; the sequence is CLL.

This sequence belongs to the small GTPase superfamily. Ras family. In terms of assembly, interacts with EXOC2/Sec5 and EXOC8/Exo84. Interacts (via effector domain) with RALBP1. Prenylation is essential for membrane localization. In terms of processing, the farnesylated form confers resistance to the proapoptotic and anti-anchorage-dependent growth effects of some geranylgeranyltransferase I inhibitors.

It localises to the cell membrane. Its subcellular location is the midbody. The catalysed reaction is GTP + H2O = GDP + phosphate + H(+). With respect to regulation, alternates between an inactive form bound to GDP and an active form bound to GTP. Activated by a guanine nucleotide-exchange factor (GEF) and inactivated by a GTPase-activating protein (GAP). Functionally, multifunctional GTPase involved in a variety of cellular processes including gene expression, cell migration, cell proliferation, oncogenic transformation and membrane trafficking. Accomplishes its multiple functions by interacting with distinct downstream effectors. Acts as a GTP sensor for GTP-dependent exocytosis of dense core vesicles. Required both to stabilize the assembly of the exocyst complex and to localize functional exocyst complexes to the leading edge of migrating cells. Required for suppression of apoptosis. In late stages of cytokinesis, upon completion of the bridge formation between dividing cells, mediates exocyst recruitment to the midbody to drive abscission. Involved in ligand-dependent receptor mediated endocytosis of the EGF and insulin receptors. The protein is Ras-related protein Ral-B (RALB) of Macaca fascicularis (Crab-eating macaque).